The chain runs to 261 residues: 14-3-3 protein 8 (261 aa).

The disordered stretch occupies residues 237-261 (DIPEDGEEAPKGDAANKVGAGEDAE).

It belongs to the 14-3-3 family. In terms of assembly, homodimer.

The polypeptide is 14-3-3 protein 8 (TFT8) (Solanum lycopersicum (Tomato)).